The chain runs to 188 residues: GTPase KRas (188 aa).

GTP-binding positions include 10–18 (GAGGVGKSA), 29–35 (VDEYDPT), 59–60 (AG), and 116–119 (NKCD). The Effector region signature appears at 32-40 (YDPTIEDSY). A disordered region spans residues 168–188 (EKMSKDGKKKKKKTKTKCIIM). Cysteine 185 carries the cysteine methyl ester modification. Residue cysteine 185 is the site of S-farnesyl cysteine attachment. Residues 186-188 (IIM) constitute a propeptide, removed in mature form.

Belongs to the small GTPase superfamily. Ras family.

Its subcellular location is the cell membrane. The protein resides in the cytoplasm. The catalysed reaction is GTP + H2O = GDP + phosphate + H(+). With respect to regulation, alternates between an inactive form bound to GDP and an active form bound to GTP. Activated by a guanine nucleotide-exchange factor (GEF) and inactivated by a GTPase-activating protein (GAP). Functionally, ras proteins bind GDP/GTP and possess intrinsic GTPase activity. Plays an important role in the regulation of cell proliferation. May play a role in promoting oncogenic events by inducing transcriptional silencing of tumor suppressor genes (TSGs). The sequence is that of GTPase KRas (KRAS) from Meleagris gallopavo (Wild turkey).